The chain runs to 188 residues: Elongation factor P (188 aa).

Belongs to the elongation factor P family.

The protein resides in the cytoplasm. It functions in the pathway protein biosynthesis; polypeptide chain elongation. Functionally, involved in peptide bond synthesis. Stimulates efficient translation and peptide-bond synthesis on native or reconstituted 70S ribosomes in vitro. Probably functions indirectly by altering the affinity of the ribosome for aminoacyl-tRNA, thus increasing their reactivity as acceptors for peptidyl transferase. In Chlorobaculum parvum (strain DSM 263 / NCIMB 8327) (Chlorobium vibrioforme subsp. thiosulfatophilum), this protein is Elongation factor P.